The primary structure comprises 83 residues: UPF0297 protein LCK_00468 (83 aa).

This sequence belongs to the UPF0297 family.

This Leuconostoc citreum (strain KM20) protein is UPF0297 protein LCK_00468.